The following is a 356-amino-acid chain: Phosphate acyltransferase (356 aa).

This sequence belongs to the PlsX family. Homodimer. Probably interacts with PlsY.

Its subcellular location is the cytoplasm. It carries out the reaction a fatty acyl-[ACP] + phosphate = an acyl phosphate + holo-[ACP]. The protein operates within lipid metabolism; phospholipid metabolism. Functionally, catalyzes the reversible formation of acyl-phosphate (acyl-PO(4)) from acyl-[acyl-carrier-protein] (acyl-ACP). This enzyme utilizes acyl-ACP as fatty acyl donor, but not acyl-CoA. This Shigella flexneri serotype 5b (strain 8401) protein is Phosphate acyltransferase.